The following is a 102-amino-acid chain: Small ribosomal subunit protein uS10 (102 aa).

The protein belongs to the universal ribosomal protein uS10 family. As to quaternary structure, part of the 30S ribosomal subunit.

In terms of biological role, involved in the binding of tRNA to the ribosomes. The chain is Small ribosomal subunit protein uS10 from Streptococcus sanguinis (strain SK36).